We begin with the raw amino-acid sequence, 396 residues long: Protein RepA (396 aa).

Disordered regions lie at residues Ser-141–Lys-170 and Asn-356–Thr-396. The span at Lys-154–Thr-168 shows a compositional bias: basic and acidic residues.

The sequence is that of Protein RepA (repA) from Bacillus subtilis.